The following is a 2240-amino-acid chain: MDSIKLTESHQGLSVLHAKQATETMRETLSSSSSPLSLSSITSPLSSASEPPALGEIQARVSESTLFSNAQVPEFWETCVHEVIQQRCREAPESSAVAAWDGSFTYSELDELSNRLASSLILLGVKAETFVPICMEKSRWATVAILGVMKAGGAFTLLDPSYPLPRLKTICEELSSLVVLSSTTQSERCTQLANVIVVEHLCRAWHPGAYLAQSPATVCPSNVLYVAFTSGSTGKPKGVLIEHRAYSTGAREHLRVFQIDQTSRVLQFSSYAFDVNIMETLSTLMAGGCLCVVGEAQRSDVSLFAEAVDELQVSHAMLTPSFARTVPWENVRHLRVLILGGEEMRESDAAICAERGVRLINAYGAAECSVNATARPGVQPGDNLSTIGHGTGAIAWIIDPDDPERQMGPGTAGELLLEGPIVGRGYLNSPDMTDRVFIDPPTWLRQLRMMDYQHQLYRTGDLAVQDSTGALTLLGRKEGQVKIRGQRVEVAEIEQHIDQVLTAATEVVVEKVTPECDQRDVLMAFVQTGRAAQGWTEGSPFFLPPRPASIQEFSAAQSQLREQLPSYMIPAIFIGVSCIPRTPSGKADRRLLRMTAARLSREELQAFAGSPVHSRPPTTATEHALQQLYADVLELPIMRISMEDSFVRLGGDSIMAVRLVGAARQAGLVLDIRDVLGTARLEEQARKATPVSEETPCEAYVPFSMLGSRCTDRDEVLRVAAEQCGTSPSEIEDIFPCTPLQEGMLALSSSQPQMYVGQIVFGMPEDVDVSQFKAAWQSTADATPILRTRIIHTPQGLLQVVLRGKLAWENYNEHPEACAADVGSQIGSPGAPLIRFALGDGDHRGEFTLTVHHAVWDAWTMRLIHDALERSFQGEMTKKHPFHPFIQYLQQVDGATMDDFWRTELADLEAPSFPALPSTQHRPSPTAMLRHTVEKIEVVPRIHTMASYIHLAWSLLVAHYTDSTEAVYGAIVSGRNSPVAAINELAGPTIATVPVRVRVSPEDTVSAALEQIQTCMVRMVPHEQAGLLRIAKASPDAARACSFQSHLNIQVVEQEHRLLPARRGIASTGMELTRFSSYALNLMLQLSPDNTSVTVDIAYDPQVLSAWEVDRMIHQWEHILRQICREPSGSLQELDFASPQDRDLLRLRNSETPTVDWRCLHDLVLAQEARQPSREAVSAWDGDFTYRELAELSSNFARLLNLFAVGRGSFVPICMDKSRWAIVSILAVLQAGATCVLLDPQHPRQRMQDTIAGLSVPVLVNAPSTAPVTKGLCAIELCVSAKLTEQLWTNAYGSRFQTHVDPDDLAFLIFTSGSTGVPKGIAMPHCTVSSSIYHNSAPMMFDADTRALHFSSYAFDVSIYEIFTTLASGGCVCVPSEFQRTNELADFIQQRAVNWTFLTPSTAQSLHPSEVPGVATLVLGGEAVTPDHVKTWAPGRSLINGYGPAEATICAVGPMPEHGWDPGNIGHVVGGVGWVTIPSDPSRLAAIGAIGELLLEGPFLARGYLNQHEATAASFISPPPWHRTLLPDCDAETTRLYRTGDLVQYEEDGSIRYIGRRDTQLKLRGQRIDLGEIETQLRRSFPGVHDVVAEAIQLPILQDRAALVAFIGCQEAQVTESAVGEQVLSAVDESFQHTVSLAQTRLQAILPPYMLPSVFFPLAHCPKTLTGKTDRRYLRQAVLALPPHELQRYRVAGRQKARIPVSRGPELRLQSIWADLLRIPCDDIGSDDTFLLHGGDSVAAMRMVALARRADFTFRVTDVLSNCTLSELARCTGEEPCLTDGDGTLPTTHEFESGHKMVDSPVSADYHTGMIGTELEMENDAIAVYPTTQAQSFLIKRYPWTHWRFSFHGEVSVERLRTACARLVAAHSIMRTLFVAGAGGERVRHVVMKELDIPLHTGTTHKNLVDYCQSICDAEQEMDVLEAVLPTRLTLISDALQTSHIFILRLSHAQYDGICVPKIFADLEALYNGTEPIAPTRFERYLDERRWYSGERARAFWKEYLAGSSPPCTMPVKATPPTDSDDSRPSAARSVISASQTVRCTAIPFQVTLATVVKAAACLVLARLTGRTDITVGQTVNGRSLPQPWVSEVVGPCVNYIPFRATLSESMSIQDYLVHMQSQHNRCIHYDGAELDTIIKNCTTWDPSTEFGFILQHQNIDMDLSLTLDGNRCASCASSGRLRPSNEVWICSTPSPSGVDLDVVASSQTLTADAAKNLVDDIADMIQTLLYNLETPLRDVVEFD.

Residues 22–52 (TETMRETLSSSSSPLSLSSITSPLSSASEPP) are disordered. Residues 28–52 (TLSSSSSPLSLSSITSPLSSASEPP) show a composition bias toward low complexity. The adenylation 1 stretch occupies residues 85–484 (QQRCREAPES…GRKEGQVKIR (400 aa)). Residues 616 to 692 (PPTTATEHAL…EQARKATPVS (77 aa)) form the Carrier 1 domain. The residue at position 653 (S653) is an O-(pantetheine 4'-phosphoryl)serine. The segment at 732–1144 (EDIFPCTPLQ…DFASPQDRDL (413 aa)) is condensation 1. An adenylation 2 region spans residues 1167–1564 (QEARQPSREA…GRRDTQLKLR (398 aa)). Residues 1700-1776 (PVSRGPELRL…ELARCTGEEP (77 aa)) enclose the Carrier 2 domain. The residue at position 1737 (S1737) is an O-(pantetheine 4'-phosphoryl)serine. Positions 1845-2159 (FSFHGEVSVE…ILQHQNIDMD (315 aa)) are condensation 2. The segment at 2008–2027 (CTMPVKATPPTDSDDSRPSA) is disordered.

This sequence belongs to the NRP synthetase family.

The catalysed reaction is L-proline + L-tryptophan + 2 ATP = brevianamide F + 2 AMP + 2 diphosphate + 2 H(+). Its pathway is alkaloid biosynthesis. Its function is as follows. Nonribisomal peptide synthetase; part of the gene cluster that mediates the biosynthesis of notoamide, a fungal indole alkaloid that belongs to a family of natural products containing a characteristic bicyclo[2.2.2]diazaoctane core. The first step of notoamide biosynthesis involves coupling of L-proline and L-tryptophan by the bimodular NRPS notE, to produce cyclo-L-tryptophan-L-proline called brevianamide F. The reverse prenyltransferase notF then acts as a deoxybrevianamide E synthase and converts brevianamide F to deoxybrevianamide E via reverse prenylation at C-2 of the indole ring leading to the bicyclo[2.2.2]diazaoctane core. Deoxybrevianamide E is further hydroxylated at C-6 of the indole ring, likely catalyzed by the cytochrome P450 monooxygenase notG, to yield 6-hydroxy-deoxybrevianamide E. 6-hydroxy-deoxybrevianamide E is a specific substrate of the prenyltransferase notC for normal prenylation at C-7 to produce 6-hydroxy-7-prenyl-deoxybrevianamide, also called notoamide S. As the proposed pivotal branching point in notoamide biosynthesis, notoamide S can be diverted to notoamide E through an oxidative pyran ring closure putatively catalyzed by either notH cytochrome P450 monooxygenase or the notD FAD-linked oxidoreductase. This step would be followed by an indole 2,3-epoxidation-initiated pinacol-like rearrangement catalyzed by the notB FAD-dependent monooxygenase leading to the formation of notoamide C and notoamide D. On the other hand notoamide S is converted to notoamide T by notH (or notD), a bifunctional oxidase that also functions as the intramolecular Diels-Alderase responsible for generation of (+)-notoamide T. To generate antipodal (-)-notoaminide T, notH' (or notD') in Aspergillus versicolor is expected to catalyze a Diels-Alder reaction leading to the opposite stereochemistry. The remaining oxidoreductase notD (or notH) likely catalyzes the oxidative pyran ring formation to yield (+)-stephacidin A. The FAD-dependent monooxygenase notI is highly similar to notB and is predicted to catalyze a similar conversion from (+)-stephacidin A to (-)-notoamide B via the 2,3-epoxidation of (+)-stephacidin A followed by a pinacol-type rearrangement. Finally, it remains unclear which enzyme could be responsible for the final hydroxylation steps leading to notoamide A and sclerotiamide. This Aspergillus sp. (strain MF297-2) protein is Nonribisomal peptide synthetase notE.